A 198-amino-acid polypeptide reads, in one-letter code: Probable chemoreceptor glutamine deamidase CheD (198 aa).

Belongs to the CheD family.

It catalyses the reaction L-glutaminyl-[protein] + H2O = L-glutamyl-[protein] + NH4(+). In terms of biological role, probably deamidates glutamine residues to glutamate on methyl-accepting chemotaxis receptors (MCPs), playing an important role in chemotaxis. In Xanthomonas campestris pv. campestris (strain 8004), this protein is Probable chemoreceptor glutamine deamidase CheD.